The sequence spans 41 residues: Large ribosomal subunit protein bL36 (41 aa).

This sequence belongs to the bacterial ribosomal protein bL36 family.

This chain is Large ribosomal subunit protein bL36, found in Cereibacter sphaeroides (strain ATCC 17029 / ATH 2.4.9) (Rhodobacter sphaeroides).